Here is a 281-residue protein sequence, read N- to C-terminus: MKILPVGSRFCPTDLGLVRLYLRNKVERNQSSFITTMDIHQDYPWLLPHVNNPLFNNNEWYYFVPLTERGGKILSVHRKVAARGGSEGGTWRSNDGKKEIKDGHMQKGDGLRASDDLQKVVLCRIRYKKEANVNEFGLVNHQAHQTQDALTGFADQLEMMLEGQEDREQKEEADLTGFADSLETMLEGQEDHEQPEDADLTGFADSLETMLEGHEDREQPEEAELTVTQQQQQQQQQQQRQEDCDVTQEQEKDDVMVLINNPNDALALGNYEIIDLTRVDK.

Residues 4–156 (LPVGSRFCPT…QDALTGFADQ (153 aa)) form the NAC domain. 2 disordered regions span residues 84-109 (GGSE…QKGD) and 211-249 (LEGH…VTQE). Over residues 94 to 109 (NDGKKEIKDGHMQKGD) the composition is skewed to basic and acidic residues. Residues 109–162 (DGLRASDDLQKVVLCRIRYKKEANVNEFGLVNHQAHQTQDALTGFADQLEMMLE) mediate DNA binding. Low complexity predominate over residues 229-239 (QQQQQQQQQQQ).

The protein resides in the nucleus. The sequence is that of NAC domain-containing protein 6 (NAC006) from Arabidopsis thaliana (Mouse-ear cress).